The following is a 130-amino-acid chain: UPF0102 protein TDE_2303 (130 aa).

This sequence belongs to the UPF0102 family.

This is UPF0102 protein TDE_2303 from Treponema denticola (strain ATCC 35405 / DSM 14222 / CIP 103919 / JCM 8153 / KCTC 15104).